Here is an 86-residue protein sequence, read N- to C-terminus: High affinity immunoglobulin epsilon receptor subunit gamma (86 aa).

An N-terminal signal peptide occupies residues 1–18 (MISAVILFLLLLVEQAAA). At 19–23 (LGEPQ) the chain is on the extracellular side. The chain crosses the membrane as a helical span at residues 24–44 (LCYILDAVLFLYGIVLTLLYC). At 45–86 (RLKIQVRKAAIASREKADAVYTGLNTRSQETYETLKHEKPPQ) the chain is on the cytoplasmic side. The ITAM domain maps to 54-82 (AIASREKADAVYTGLNTRSQETYETLKHE). Phosphotyrosine is present on residues Y65 and Y76. At T78 the chain carries Phosphothreonine.

The protein belongs to the CD3Z/FCER1G family. IgE Fc receptor is a tetramer of an alpha chain, a beta chain, and two disulfide linked gamma chains. Associates with FCGR1A; forms a functional signaling complex. The signaling subunit of immunoglobulin gamma (IgG) Fc receptor complex. As a homodimer or a heterodimer of CD247 and FCER1G, associates with the ligand binding subunit FCGR3A to form a functional receptor complex. Associates with CLEC6A. Interacts with CLEC4E. Interacts (via ITAM domain) with SYK (via SH2 domains); activates SYK, enabling integrin-mediated activation of neutrophils and macrophages. Interacts with CSF2RB and recruits SYK in response to IL3 stimulation; this interaction is direct. Interacts with CD300LH; the interaction may be indirect. Interacts with CD300LD. Interacts with TARM1. In terms of tissue distribution, expressed in mast cells (at protein level). Expressed in basophils (at protein level).

Its subcellular location is the cell membrane. Functionally, adapter protein containing an immunoreceptor tyrosine-based activation motif (ITAM) that transduces activation signals from various immunoreceptors. As a component of the high-affinity immunoglobulin E (IgE) receptor, mediates allergic inflammatory signaling in mast cells. As a constitutive component of interleukin-3 receptor complex, selectively mediates interleukin 4/IL4 production by basophils, priming T-cells toward effector T-helper 2 subset. Associates with pattern recognition receptors CLEC4D and CLEC4E to form a functional signaling complex in myeloid cells. Binding of mycobacterial trehalose 6,6'-dimycolate (TDM) to this receptor complex leads to phosphorylation of ITAM, triggering activation of SYK, CARD9 and NF-kappa-B, consequently driving maturation of antigen-presenting cells and shaping antigen-specific priming of T-cells toward effector T-helper 1 and T-helper 17 cell subtypes. May function cooperatively with other activating receptors. Functionally linked to integrin beta-2/ITGB2-mediated neutrophil activation. Also involved in integrin alpha-2/ITGA2-mediated platelet activation. This Mus musculus (Mouse) protein is High affinity immunoglobulin epsilon receptor subunit gamma.